We begin with the raw amino-acid sequence, 313 residues long: tRNA dimethylallyltransferase (313 aa).

Residue 10–17 (GPTAVGKT) coordinates ATP. A substrate-binding site is contributed by 12–17 (TAVGKT). Residues 35-38 (DSMQ) are interaction with substrate tRNA.

The protein belongs to the IPP transferase family. In terms of assembly, monomer. Requires Mg(2+) as cofactor.

It carries out the reaction adenosine(37) in tRNA + dimethylallyl diphosphate = N(6)-dimethylallyladenosine(37) in tRNA + diphosphate. Functionally, catalyzes the transfer of a dimethylallyl group onto the adenine at position 37 in tRNAs that read codons beginning with uridine, leading to the formation of N6-(dimethylallyl)adenosine (i(6)A). In Alkaliphilus oremlandii (strain OhILAs) (Clostridium oremlandii (strain OhILAs)), this protein is tRNA dimethylallyltransferase.